We begin with the raw amino-acid sequence, 477 residues long: UDP-N-acetylmuramate--L-alanine ligase (477 aa).

G112–T118 contacts ATP.

It belongs to the MurCDEF family.

It is found in the cytoplasm. It catalyses the reaction UDP-N-acetyl-alpha-D-muramate + L-alanine + ATP = UDP-N-acetyl-alpha-D-muramoyl-L-alanine + ADP + phosphate + H(+). It participates in cell wall biogenesis; peptidoglycan biosynthesis. Its function is as follows. Cell wall formation. The polypeptide is UDP-N-acetylmuramate--L-alanine ligase (Delftia acidovorans (strain DSM 14801 / SPH-1)).